Here is a 155-residue protein sequence, read N- to C-terminus: cAMP-dependent protein kinase type II-alpha regulatory subunit (155 aa).

The segment at 1–34 is disordered; that stretch reads SGSQDLEPSSGLVTDAIADSESEDDEDLDVPIPS. The interval 1-81 is dimerization and phosphorylation; sequence SGSQDLEPSS…LQEACKDILL (81 aa). Over residues 18-29 the composition is skewed to acidic residues; that stretch reads ADSESEDDEDLD. Phosphoserine is present on residues Ser-20 and Ser-22. At Ser-41 the chain carries Phosphoserine; by PKA. Residues 82–155 and Glu-150 each bind 3',5'-cyclic AMP; that span reads FKNL…ALMY.

Belongs to the cAMP-dependent kinase regulatory chain family. In terms of assembly, the inactive form of the enzyme is composed of two regulatory chains and two catalytic chains. Activation by cAMP produces two active catalytic monomers and a regulatory dimer that binds four cAMP molecules. Interacts with AKAP4 and CBFA2T3. Interacts with the phosphorylated form of PJA2. Interacts with MYRIP; this interaction may link PKA to components of the exocytosis machinery, thus facilitating exocytosis, including insulin release. Forms a complex composed of PRKAR2A, GSK3B and GSKIP through GSKIP interaction; facilitates PKA-induced phosphorylation and regulates GSK3B activity. Interacts with ADCY8; inhibits adenylate cyclase activity through PKA phosphorylation. Phosphorylated by the activated catalytic chain. As to expression, four types of regulatory chains are found: I-alpha, I-beta, II-alpha, and II-beta. Their expression varies among tissues and is in some cases constitutive and in others inducible.

It localises to the cytoplasm. The protein resides in the cell membrane. Its function is as follows. Regulatory subunit of the cAMP-dependent protein kinases involved in cAMP signaling in cells. Type II regulatory chains mediate membrane association by binding to anchoring proteins, including the MAP2 kinase. The sequence is that of cAMP-dependent protein kinase type II-alpha regulatory subunit (PRKAR2A) from Sus scrofa (Pig).